A 94-amino-acid polypeptide reads, in one-letter code: Large ribosomal subunit protein uL23cz (94 aa).

This sequence belongs to the universal ribosomal protein uL23 family. Part of the 50S ribosomal subunit.

The protein localises to the plastid. It localises to the chloroplast. Functionally, binds to 23S rRNA. The sequence is that of Large ribosomal subunit protein uL23cz (rpl23-A) from Agrostis stolonifera (Creeping bentgrass).